A 961-amino-acid chain; its full sequence is Probable exosome complex exonuclease RRP44 (961 aa).

A PINc domain is found at 73 to 188 (HALIVDSTSL…LVFDEDSKKR (116 aa)). The CSD1 domain maps to 232-338 (IFDEYLSHDR…DEENDDENDE (107 aa)). A disordered region spans residues 322-346 (ADDMGNEDEENDDENDEPKAKKSKK). The segment covering 325–337 (MGNEDEENDDEND) has biased composition (acidic residues). A CSD2 domain is found at 381–447 (LFCPAERLIP…ENEVLLLEHD (67 aa)). One can recognise an RNB domain in the interval 479–809 (RVDLRDLTIC…IVHRLLAAAI (331 aa)).

Belongs to the RNR ribonuclease family. As to quaternary structure, component of the RNA exosome complex. Ubiquitously expressed.

It is found in the nucleus. Its subcellular location is the nucleoplasm. In terms of biological role, putative catalytic component of the RNA exosome complex which has 3'-&gt;5' exoribonuclease activity and participates in a multitude of cellular RNA processing and degradation events. Has both 3'-5' exonuclease and endonuclease activities. Involved in regulation of antisense ribosomal siRNA production. The protein is Probable exosome complex exonuclease RRP44 (dis-3) of Caenorhabditis elegans.